The following is a 256-amino-acid chain: Large ribosomal subunit protein eL8A (256 aa).

The interval methionine 1–glycine 37 is disordered. Polar residues predominate over residues serine 16 to lysine 32.

This sequence belongs to the eukaryotic ribosomal protein eL8 family. Component of the large ribosomal subunit (LSU). Mature yeast ribosomes consist of a small (40S) and a large (60S) subunit. The 40S small subunit contains 1 molecule of ribosomal RNA (18S rRNA) and 33 different proteins (encoded by 57 genes). The large 60S subunit contains 3 rRNA molecules (25S, 5.8S and 5S rRNA) and 46 different proteins (encoded by 81 genes).

It localises to the cytoplasm. Component of the ribosome, a large ribonucleoprotein complex responsible for the synthesis of proteins in the cell. The small ribosomal subunit (SSU) binds messenger RNAs (mRNAs) and translates the encoded message by selecting cognate aminoacyl-transfer RNA (tRNA) molecules. The large subunit (LSU) contains the ribosomal catalytic site termed the peptidyl transferase center (PTC), which catalyzes the formation of peptide bonds, thereby polymerizing the amino acids delivered by tRNAs into a polypeptide chain. The nascent polypeptides leave the ribosome through a tunnel in the LSU and interact with protein factors that function in enzymatic processing, targeting, and the membrane insertion of nascent chains at the exit of the ribosomal tunnel. This Saccharomyces cerevisiae (strain ATCC 204508 / S288c) (Baker's yeast) protein is Large ribosomal subunit protein eL8A.